Reading from the N-terminus, the 254-residue chain is Glutathione S-transferase U12 (254 aa).

The Nuclear localization signal signature appears at 19–23 (KKRKK). The region spanning 33–114 (TTVKLIGTWA…YVDESWPSDL (82 aa)) is the GST N-terminal domain. Glutathione-binding positions include 43-44 (SP), 71-72 (GK), 85-86 (KV), and 98-99 (ES). A GST C-terminal domain is found at 120-252 (LPSERAFARF…EFIEFAKKKF (133 aa)).

Belongs to the GST superfamily. Tau family.

The protein localises to the nucleus. The enzyme catalyses RX + glutathione = an S-substituted glutathione + a halide anion + H(+). In terms of biological role, may be involved in the conjugation of reduced glutathione to a wide number of exogenous and endogenous hydrophobic electrophiles and have a detoxification role against certain herbicides. The protein is Glutathione S-transferase U12 (GSTU12) of Arabidopsis thaliana (Mouse-ear cress).